We begin with the raw amino-acid sequence, 513 residues long: MPSSPGNRQHSLRSACERCRLHKLKCTILPQKRFEGPQEAPEQCTRCARAKAKCVFGRRAPPKHRASSSNDRSSVSKGINSTTPATRTMQPNATGFVSSHRIELPPSPASNQSSLKHSSVWDNLLDKTTPQEPRADFSSFSYPPVPFDLQSMCLDEVDMAASALPTTEPNFSSAQREHEFSAMSMSPGLGYDNLDELLALNEQPNISDASSPLLSETDPSHGMIRLSSLLKEIHETQHNLQERSFSCTTSRGLAGYPIGRVLHAAQTFSSMVTNLMRPRVVQTSHTDVQGFNPSLYSSSPESTELPSLHQEFVSSLEQMKTNALEQSRRLGEDDLDKYASPCSSTTSLQDTMLDMPIVMLVFCCFASLSKLYCSVFRFFEKSLHSQSCRAKDSTYVPPLQDTRTLQLGELSIENDTEFKVLKALRMLLDAFQAAEASLGLPSSLTVLNSNKSTISASAEPAVSDTGSLQHHLRHSLIKQCVTFDDRHLERTLTSLVTHVENLKQLLRVQNGLH.

The segment at residues 16–54 (CERCRLHKLKCTILPQKRFEGPQEAPEQCTRCARAKAKC) is a DNA-binding region (zn(2)-C6 fungal-type). Disordered regions lie at residues 58–92 (RRAP…MQPN) and 97–116 (VSSH…SSLK). Residues 67–76 (SSSNDRSSVS) show a composition bias toward low complexity. Residues 77 to 92 (KGINSTTPATRTMQPN) are compositionally biased toward polar residues.

Its subcellular location is the nucleus. Its function is as follows. Transcription factor that regulates the expression of the gene cluster that mediates the biosynthesis of varicidin A, an antifungal natural product containing a cis-octahydrodecalin core. The protein is Varicidin biosynthesis cluster-specific transcription factor of Talaromyces variabilis (Penicillium variabile).